The following is a 268-amino-acid chain: Aliphatic sulfonates import ATP-binding protein SsuB 2 (268 aa).

The ABC transporter domain occupies 15 to 236 (LAVRKLQKTF…VRGSHRLAAL (222 aa)). Residue 47 to 54 (GRSGCGKS) participates in ATP binding.

Belongs to the ABC transporter superfamily. Aliphatic sulfonates importer (TC 3.A.1.17.2) family. The complex is composed of two ATP-binding proteins (SsuB), two transmembrane proteins (SsuC) and a solute-binding protein (SsuA).

It is found in the cell inner membrane. The catalysed reaction is ATP + H2O + aliphatic sulfonate-[sulfonate-binding protein]Side 1 = ADP + phosphate + aliphatic sulfonateSide 2 + [sulfonate-binding protein]Side 1.. In terms of biological role, part of the ABC transporter complex SsuABC involved in aliphatic sulfonates import. Responsible for energy coupling to the transport system. The sequence is that of Aliphatic sulfonates import ATP-binding protein SsuB 2 from Pseudomonas fluorescens (strain ATCC BAA-477 / NRRL B-23932 / Pf-5).